Reading from the N-terminus, the 120-residue chain is Glycine cleavage system H protein (120 aa).

The Lipoyl-binding domain maps to 17–99 (IATVGITAHA…RGAGWFFKLK (83 aa)). The residue at position 58 (K58) is an N6-lipoyllysine.

It belongs to the GcvH family. In terms of assembly, the glycine cleavage system is composed of four proteins: P, T, L and H. Requires (R)-lipoate as cofactor.

In terms of biological role, the glycine cleavage system catalyzes the degradation of glycine. The H protein shuttles the methylamine group of glycine from the P protein to the T protein. The chain is Glycine cleavage system H protein from Allorhizobium ampelinum (strain ATCC BAA-846 / DSM 112012 / S4) (Agrobacterium vitis (strain S4)).